Here is an 87-residue protein sequence, read N- to C-terminus: Phospholemman (87 aa).

A signal peptide spans 1–20 (MASLSHILVLWVGILTVVNA). Residues 21–35 (EAPQEHDPFTYDYQS) lie on the Extracellular side of the membrane. The chain crosses the membrane as a helical span at residues 36 to 56 (LRIGGLIIAGILFILGILIVL). Over 57–87 (SRRCRCKFNQQQSLGKMRSPHLAAQFSSESC) the chain is Cytoplasmic. Cys-60 carries the S-palmitoyl cysteine lipid modification. Cys-62 is modified (S-glutathionyl cysteine; alternate). A lipid anchor (S-palmitoyl cysteine; alternate) is attached at Cys-62. The residue at position 75 (Ser-75) is a Phosphoserine; by PKA and PKC. Residue Ser-83 is modified to Phosphoserine; by PKA.

This sequence belongs to the FXYD family. As to quaternary structure, homotetramer. Monomer. Regulatory subunit of the sodium/potassium-transporting ATPase (NKA) which is composed of a catalytic alpha subunit, a non-catalytic beta subunit and an additional regulatory subunit. The monomeric form associates with NKA while the oligomeric form does not. Interacts with the catalytic alpha-1 subunit ATP1A1. Also interacts with the catalytic alpha-2 and alpha-3 subunits ATP1A2 and ATP1A3. Very little interaction with ATP1A1, ATP1A2 or ATP1A3 when phosphorylated at Ser-83. Interacts with the non-catalytic beta-1 subunit ATP1B1. Oxidative stress decreases interaction with ATP1A1 but increases interaction with ATP1B1. Major plasma membrane substrate for cAMP-dependent protein kinase (PKA) and protein kinase C (PKC) in several different tissues. Phosphorylated in response to insulin and adrenergic stimulation. Phosphorylation at Ser-83 stimulates sodium/potassium-transporting ATPase activity while the unphosphorylated form inhibits sodium/potassium-transporting ATPase activity. Phosphorylation increases tetramerization, decreases binding to ATP1A1 and reduces inhibition of ATP1A1 activity. Phosphorylation at Ser-75 leads to greatly reduced interaction with ATP1A1, ATP1A2 and ATP1A3. May be phosphorylated by DMPK. Post-translationally, palmitoylation increases half-life and stability and is enhanced upon phosphorylation at Ser-83 by PKA.

The protein localises to the cell membrane. The protein resides in the sarcolemma. It localises to the apical cell membrane. It is found in the membrane. Its subcellular location is the caveola. The protein localises to the T-tubule. Its function is as follows. Associates with and regulates the activity of the sodium/potassium-transporting ATPase (NKA) which transports Na(+) out of the cell and K(+) into the cell. Inhibits NKA activity in its unphosphorylated state and stimulates activity when phosphorylated. Reduces glutathionylation of the NKA beta-1 subunit ATP1B1, thus reversing glutathionylation-mediated inhibition of ATP1B1. Contributes to female sexual development by maintaining the excitability of neurons which secrete gonadotropin-releasing hormone. The chain is Phospholemman from Sus scrofa (Pig).